Consider the following 382-residue polypeptide: cAMP-dependent protein kinase type I-alpha regulatory subunit (382 aa).

Ala-2 carries the N-acetylalanine modification. Residues 2–136 form a dimerization and phosphorylation region; that stretch reads ATSSSSSSEE…AALAKAIEKN (135 aa). Residues 62 to 96 form a disordered region; the sequence is TKQLLNQQKSGSRSDSREDEISPPPPMNPVVKGRR. Positions 97-101 match the Pseudophosphorylation motif motif; the sequence is RRGAI. 3',5'-cyclic AMP-binding positions include 138–255, Glu-203, Arg-212, 256–382, Glu-327, and Arg-336; these read LFAH…SKVS and ILES…SLSV.

The protein belongs to the cAMP-dependent kinase regulatory chain family. As to quaternary structure, the inactive form of the enzyme is composed of two regulatory chains and two catalytic chains. Activation by cAMP produces two active catalytic monomers and a regulatory dimer that binds four cAMP molecules. Post-translationally, the pseudophosphorylation site binds to the substrate-binding region of the catalytic chain but is not phosphorylated. The physiological significance of phosphorylations by other kinases is unclear.

Its subcellular location is the cell membrane. This Gallus gallus (Chicken) protein is cAMP-dependent protein kinase type I-alpha regulatory subunit (PRKAR1A).